The primary structure comprises 131 residues: Predicted GPI-anchored protein 26 (131 aa).

Residues 1 to 18 (MHFSKIIAGSALSSVALA) form the signal peptide. N-linked (GlcNAc...) asparagine glycans are attached at residues N22 and N104. G110 carries GPI-anchor amidated glycine lipidation. Positions 111–131 (AGSKNVASALVGVVAIAAAMM) are cleaved as a propeptide — removed in mature form.

The protein localises to the cell membrane. Functionally, GPI-anchored protein involved in proper cell wall integrity. Does not seem to be directly involved in the synthesis of the cell wall. Required for normal virulence in a mouse model of disseminated candidiasis. This Candida albicans (strain SC5314 / ATCC MYA-2876) (Yeast) protein is Predicted GPI-anchored protein 26 (PGA26).